Reading from the N-terminus, the 1054-residue chain is Topoisomerase 1-associated factor 1 (1054 aa).

4 disordered regions span residues 522–543, 823–846, 865–953, and 968–1054; these read KADD…HESA, RDDK…EDDE, EMFA…TINL, and VSDG…DDDE. The segment covering 823–838 has biased composition (basic and acidic residues); it reads RDDKERRGAGGDKEGS. Residues 877–887 show a composition bias toward basic residues; sequence KTKQKLKRKGT. Basic and acidic residues-rich tracts occupy residues 890–901, 928–953, and 979–1017; these read STREREKQRDYT, ERDR…TINL, and TESH…HDSD.

It belongs to the timeless family. In terms of assembly, component of the fork protection complex (FPC) consisting of TOF1 and CSM3.

The protein localises to the nucleus. Its function is as follows. Forms a fork protection complex (FPC) with CSM3 and which is required for chromosome segregation during meiosis and DNA damage repair. FPC coordinates leading and lagging strand synthesis and moves with the replication fork. FPC stabilizes replication forks in a configuration that is recognized by replication checkpoint sensors. The polypeptide is Topoisomerase 1-associated factor 1 (TOF1) (Yarrowia lipolytica (strain CLIB 122 / E 150) (Yeast)).